The sequence spans 377 residues: uncharacterized protein (377 aa).

32 to 39 (GPINSGKT) contributes to the ATP binding site.

Belongs to the archaeal ATPase family.

This is an uncharacterized protein from Methanocaldococcus jannaschii (strain ATCC 43067 / DSM 2661 / JAL-1 / JCM 10045 / NBRC 100440) (Methanococcus jannaschii).